A 329-amino-acid polypeptide reads, in one-letter code: GMP reductase (329 aa).

C178 functions as the Thioimidate intermediate in the catalytic mechanism. Residue 207 to 230 (VIADGGIRTHGDVAKSIRMGATMV) coordinates NADP(+).

This sequence belongs to the IMPDH/GMPR family. GuaC type 2 subfamily.

It carries out the reaction IMP + NH4(+) + NADP(+) = GMP + NADPH + 2 H(+). Its function is as follows. Catalyzes the irreversible NADPH-dependent deamination of GMP to IMP. It functions in the conversion of nucleobase, nucleoside and nucleotide derivatives of G to A nucleotides, and in maintaining the intracellular balance of A and G nucleotides. This chain is GMP reductase, found in Lactococcus lactis subsp. cremoris (strain MG1363).